The chain runs to 69 residues: Probable rubredoxin HupI (69 aa).

Residues 16 to 67 (VTRLECGICWTVYDPADGDDVAQIAPGTPFAALPEEWHCPNCDAPKSKFMAI) enclose the Rubredoxin-like domain. Residues Cys-21, Cys-24, Cys-54, and Cys-57 each contribute to the Fe cation site.

The protein belongs to the rubredoxin family. Fe(3+) is required as a cofactor.

Functionally, could be an electron transport intermediate in hydrogen oxidation. The sequence is that of Probable rubredoxin HupI (hupI) from Bradyrhizobium diazoefficiens (strain JCM 10833 / BCRC 13528 / IAM 13628 / NBRC 14792 / USDA 110).